The primary structure comprises 1019 residues: MDAQIENAIEIAWDPTSDQALKGQAFEFLNQLRTDPQAWQVCIAIFTRTPRTSPVVRLVCLEIVNHAVSSQILDGQGLGFLKQSLLEYVGRVYSGDAQDQVDPAHLQNKLTQTLTYLFVGLYKEGWESFIDDFLALAQKENNLPGVVMYLRILGSIHDEIADLMLSRSDNEARRNNDLKDLIRERDMQKIAQSWQDLLARYSHQNDGVVETTLKTIGKWVSWIDIHLVINQEMISLVLPLVGRTHAAGSGDKVRDAAVDTFTEIVAKKMKPSDKAEMITFLNLREIVSQLLASPPLNEWKGTPRYDTDLAEAVAKLVNTLVADVVRVLEDGKVDNDTRGKAEQLLRDFLPSLLRLFSDEYDEVCSTVIPSLTDLLTFLRKVGQLPPTYSEMLPPILNAIVSKMRYDETSNWGNEDEQTDEAEFQELRKKLQILQKSVASVDENLCIDLLSNLVANMFSTLEQQGSQMDWRDLDLALHEIYLFGELALPNTGLAQKSQPNPLAAERLAVMMSKMVESGIANYHHPAILLQYMEICTRYYSFFEDQQRYIPQVLENFVRLVHHDHVRIRTRSWYLFHRFVKTLRAQVGNVAKTVIESISDLLPIKAEVPGNDADDDMSSDESDHSADAVFSSQLFLYEAIGCISSTSATPPADQGLYARSVMEPLFSDMSVHIERAKAGDPQAVLQVHHIIMALGTLANGFADAHAAQQGKRPQPHEAVSNEFSRAAEAILIALNELNAIGDVRAACRSAFSRLLGVLGAAVLPQLPQWIEGLLSRSSSNDEMAMFLRLLEQVVYNFKSEIYNILDVLLTPLLQRVFSGLSDPINGTDDEIQLQELRREFVSFVQVILHNELGGVLVSASNQGTFESLISSIIDIAKTLTHGNLVASRVAFNVLSRMASQWGGPDVATIGENPMTTGAPAPAIPGFDQFMIEHFHGLCWTVLQDGGFRPNTDAQSRQILNEIAGIQQVIYSKTGDAFVNHLQGVTFPQLGIDGTEYLRLLTTSREKKPVVTWLLGLLKGRR.

It belongs to the exportin family.

It localises to the nucleus. It is found in the cytoplasm. TRNA nucleus export receptor which facilitates tRNA translocation across the nuclear pore complex. Involved in pre-tRNA splicing, probably by affecting the interaction of pre-tRNA with splicing endonuclease. The sequence is that of Exportin-T (LOS1) from Chaetomium globosum (strain ATCC 6205 / CBS 148.51 / DSM 1962 / NBRC 6347 / NRRL 1970) (Soil fungus).